The primary structure comprises 431 residues: Adenylosuccinate synthetase (431 aa).

GTP-binding positions include 12–18 (GDEGKGK) and 40–42 (GHT). Asp-13 serves as the catalytic Proton acceptor. Mg(2+)-binding residues include Asp-13 and Gly-40. IMP contacts are provided by residues 13 to 16 (DEGK), 38 to 41 (NAGH), Thr-129, Arg-143, Gln-224, Thr-239, and Arg-303. His-41 serves as the catalytic Proton donor. 299–305 (TVSNRQR) contacts substrate. GTP contacts are provided by residues Arg-305, 331–333 (KLD), and 413–415 (STG).

The protein belongs to the adenylosuccinate synthetase family. Homodimer. Mg(2+) is required as a cofactor.

It localises to the cytoplasm. It carries out the reaction IMP + L-aspartate + GTP = N(6)-(1,2-dicarboxyethyl)-AMP + GDP + phosphate + 2 H(+). Its pathway is purine metabolism; AMP biosynthesis via de novo pathway; AMP from IMP: step 1/2. Plays an important role in the de novo pathway of purine nucleotide biosynthesis. Catalyzes the first committed step in the biosynthesis of AMP from IMP. In Ehrlichia canis (strain Jake), this protein is Adenylosuccinate synthetase.